We begin with the raw amino-acid sequence, 159 residues long: Putative 4-hydroxy-4-methyl-2-oxoglutarate aldolase (159 aa).

Residues 75-78 and arginine 97 contribute to the substrate site; that span reads GDQL. Aspartate 98 lines the a divalent metal cation pocket.

It belongs to the class II aldolase/RraA-like family. Homotrimer. A divalent metal cation serves as cofactor.

It carries out the reaction 4-hydroxy-4-methyl-2-oxoglutarate = 2 pyruvate. The catalysed reaction is oxaloacetate + H(+) = pyruvate + CO2. Its function is as follows. Catalyzes the aldol cleavage of 4-hydroxy-4-methyl-2-oxoglutarate (HMG) into 2 molecules of pyruvate. Also contains a secondary oxaloacetate (OAA) decarboxylase activity due to the common pyruvate enolate transition state formed following C-C bond cleavage in the retro-aldol and decarboxylation reactions. The protein is Putative 4-hydroxy-4-methyl-2-oxoglutarate aldolase of Aromatoleum aromaticum (strain DSM 19018 / LMG 30748 / EbN1) (Azoarcus sp. (strain EbN1)).